Here is a 447-residue protein sequence, read N- to C-terminus: Divalent metal cation transporter MntH (447 aa).

The next 11 helical transmembrane spans lie at 26–48 (AGFW…GYMD), 65–85 (TLLS…AMSA), 108–128 (GFLL…AEII), 140–160 (IPLI…LLLM), 169–189 (AIVA…VLLS), 212–232 (MLYL…LYLG), 264–284 (LFLA…LFYG), 304–324 (IVGA…LLAS), 359–379 (VLSV…EAKI), 383–403 (LTFS…PLVI), and 426–446 (TATI…LGLI).

The protein belongs to the NRAMP family.

It is found in the cell membrane. H(+)-stimulated, divalent metal cation uptake system. In Pediococcus pentosaceus (strain ATCC 25745 / CCUG 21536 / LMG 10740 / 183-1w), this protein is Divalent metal cation transporter MntH.